The chain runs to 536 residues: uncharacterized protein (536 aa).

The Cytoplasmic portion of the chain corresponds to 1–8 (MVSIKRYE). The helical transmembrane segment at 9–29 (IISFVIAAFFFLSGLSMWIAF) threads the bilayer. At 30–502 (WPIFNSELRS…VWLGVIIVPR (473 aa)) the chain is on the extracellular side. N-linked (GlcNAc...) asparagine glycans are attached at residues asparagine 73, asparagine 236, asparagine 363, and asparagine 376. The helical transmembrane segment at 503–523 (IIEYLKFVLIFISICILTTLL) threads the bilayer. Residues 524–536 (VIRVRVKGTVSVV) lie on the Cytoplasmic side of the membrane.

The protein belongs to the CD36 family.

The protein localises to the membrane. This is an uncharacterized protein from Caenorhabditis elegans.